The sequence spans 178 residues: Ribosome maturation factor RimM (178 aa).

In terms of domain architecture, PRC barrel spans 101 to 178; it reads ADEYYWYQLV…VMRVEWDADF (78 aa).

The protein belongs to the RimM family. In terms of assembly, binds ribosomal protein uS19.

The protein resides in the cytoplasm. Functionally, an accessory protein needed during the final step in the assembly of 30S ribosomal subunit, possibly for assembly of the head region. Essential for efficient processing of 16S rRNA. May be needed both before and after RbfA during the maturation of 16S rRNA. It has affinity for free ribosomal 30S subunits but not for 70S ribosomes. This is Ribosome maturation factor RimM from Pseudomonas putida (strain ATCC 700007 / DSM 6899 / JCM 31910 / BCRC 17059 / LMG 24140 / F1).